The primary structure comprises 363 residues: DNA replication and repair protein RecF (363 aa).

An ATP-binding site is contributed by 30 to 37; sequence GNNAQGKT.

The protein belongs to the RecF family.

The protein localises to the cytoplasm. In terms of biological role, the RecF protein is involved in DNA metabolism; it is required for DNA replication and normal SOS inducibility. RecF binds preferentially to single-stranded, linear DNA. It also seems to bind ATP. This is DNA replication and repair protein RecF from Clostridium acetobutylicum (strain ATCC 824 / DSM 792 / JCM 1419 / IAM 19013 / LMG 5710 / NBRC 13948 / NRRL B-527 / VKM B-1787 / 2291 / W).